Reading from the N-terminus, the 325-residue chain is Thiamine-monophosphate kinase (325 aa).

Residues Asp-30, Ser-45, Thr-46, and Asp-47 each contribute to the Mg(2+) site. His-54 lines the substrate pocket. Asp-75 and Asp-122 together coordinate Mg(2+). ATP-binding positions include 121–122 and Arg-146; that span reads GD. Asp-212 contacts Mg(2+). Ser-214 serves as a coordination point for ATP. Asp-215 provides a ligand contact to Mg(2+). Positions 263 and 319 each coordinate substrate.

The protein belongs to the thiamine-monophosphate kinase family.

The catalysed reaction is thiamine phosphate + ATP = thiamine diphosphate + ADP. It functions in the pathway cofactor biosynthesis; thiamine diphosphate biosynthesis; thiamine diphosphate from thiamine phosphate: step 1/1. Functionally, catalyzes the ATP-dependent phosphorylation of thiamine-monophosphate (TMP) to form thiamine-pyrophosphate (TPP), the active form of vitamin B1. This is Thiamine-monophosphate kinase (thiL) from Salmonella typhimurium (strain LT2 / SGSC1412 / ATCC 700720).